Consider the following 786-residue polypeptide: Endonuclease MutS2 (786 aa).

ATP is bound at residue 334 to 341 (GPNTGGKT). Residues 711-786 (LDLRGERYEN…GNGATVVYFK (76 aa)) enclose the Smr domain.

Belongs to the DNA mismatch repair MutS family. MutS2 subfamily. As to quaternary structure, homodimer. Binds to stalled ribosomes, contacting rRNA.

Functionally, endonuclease that is involved in the suppression of homologous recombination and thus may have a key role in the control of bacterial genetic diversity. Its function is as follows. Acts as a ribosome collision sensor, splitting the ribosome into its 2 subunits. Detects stalled/collided 70S ribosomes which it binds and splits by an ATP-hydrolysis driven conformational change. Acts upstream of the ribosome quality control system (RQC), a ribosome-associated complex that mediates the extraction of incompletely synthesized nascent chains from stalled ribosomes and their subsequent degradation. Probably generates substrates for RQC. This is Endonuclease MutS2 from Ligilactobacillus salivarius (strain UCC118) (Lactobacillus salivarius).